Here is a 156-residue protein sequence, read N- to C-terminus: Small ribosomal subunit protein uS7 (156 aa).

The protein belongs to the universal ribosomal protein uS7 family. Part of the 30S ribosomal subunit. Contacts proteins S9 and S11.

Its function is as follows. One of the primary rRNA binding proteins, it binds directly to 16S rRNA where it nucleates assembly of the head domain of the 30S subunit. Is located at the subunit interface close to the decoding center, probably blocks exit of the E-site tRNA. The polypeptide is Small ribosomal subunit protein uS7 (Gloeothece citriformis (strain PCC 7424) (Cyanothece sp. (strain PCC 7424))).